Consider the following 170-residue polypeptide: Peptide deformylase (170 aa).

2 residues coordinate Fe cation: Cys-91 and His-133. Glu-134 is a catalytic residue. His-137 contacts Fe cation.

It belongs to the polypeptide deformylase family. The cofactor is Fe(2+).

It catalyses the reaction N-terminal N-formyl-L-methionyl-[peptide] + H2O = N-terminal L-methionyl-[peptide] + formate. Functionally, removes the formyl group from the N-terminal Met of newly synthesized proteins. Requires at least a dipeptide for an efficient rate of reaction. N-terminal L-methionine is a prerequisite for activity but the enzyme has broad specificity at other positions. The sequence is that of Peptide deformylase from Aliivibrio fischeri (strain ATCC 700601 / ES114) (Vibrio fischeri).